We begin with the raw amino-acid sequence, 377 residues long: Chaperone protein DnaJ (377 aa).

The J domain maps to 5 to 70 (DFYETLGVSK…QKRAAYDRFG (66 aa)). The CR-type zinc-finger motif lies at 138–216 (GKTAQIRVPT…CHGQGRVTEE (79 aa)). The Zn(2+) site is built by Cys-151, Cys-154, Cys-168, Cys-171, Cys-190, Cys-193, Cys-204, and Cys-207. 4 CXXCXGXG motif repeats span residues 151–158 (CDVCSGSG), 168–175 (CATCQGSG), 190–197 (CPTCHGRG), and 204–211 (CGKCHGQG).

The protein belongs to the DnaJ family. In terms of assembly, homodimer. Zn(2+) is required as a cofactor.

Its subcellular location is the cytoplasm. In terms of biological role, participates actively in the response to hyperosmotic and heat shock by preventing the aggregation of stress-denatured proteins and by disaggregating proteins, also in an autonomous, DnaK-independent fashion. Unfolded proteins bind initially to DnaJ; upon interaction with the DnaJ-bound protein, DnaK hydrolyzes its bound ATP, resulting in the formation of a stable complex. GrpE releases ADP from DnaK; ATP binding to DnaK triggers the release of the substrate protein, thus completing the reaction cycle. Several rounds of ATP-dependent interactions between DnaJ, DnaK and GrpE are required for fully efficient folding. Also involved, together with DnaK and GrpE, in the DNA replication of plasmids through activation of initiation proteins. This is Chaperone protein DnaJ from Agrobacterium fabrum (strain C58 / ATCC 33970) (Agrobacterium tumefaciens (strain C58)).